Here is a 561-residue protein sequence, read N- to C-terminus: Dihydroxy-acid dehydratase (561 aa).

Position 50 (Cys-50) interacts with [2Fe-2S] cluster. Mg(2+) is bound at residue Asp-82. Position 123 (Cys-123) interacts with [2Fe-2S] cluster. Asp-124 and Lys-125 together coordinate Mg(2+). At Lys-125 the chain carries N6-carboxylysine. A [2Fe-2S] cluster-binding site is contributed by Cys-195. Glu-447 contributes to the Mg(2+) binding site. The active-site Proton acceptor is Ser-473.

This sequence belongs to the IlvD/Edd family. Homodimer. [2Fe-2S] cluster serves as cofactor. It depends on Mg(2+) as a cofactor.

The enzyme catalyses (2R)-2,3-dihydroxy-3-methylbutanoate = 3-methyl-2-oxobutanoate + H2O. The catalysed reaction is (2R,3R)-2,3-dihydroxy-3-methylpentanoate = (S)-3-methyl-2-oxopentanoate + H2O. It functions in the pathway amino-acid biosynthesis; L-isoleucine biosynthesis; L-isoleucine from 2-oxobutanoate: step 3/4. It participates in amino-acid biosynthesis; L-valine biosynthesis; L-valine from pyruvate: step 3/4. Functionally, functions in the biosynthesis of branched-chain amino acids. Catalyzes the dehydration of (2R,3R)-2,3-dihydroxy-3-methylpentanoate (2,3-dihydroxy-3-methylvalerate) into 2-oxo-3-methylpentanoate (2-oxo-3-methylvalerate) and of (2R)-2,3-dihydroxy-3-methylbutanoate (2,3-dihydroxyisovalerate) into 2-oxo-3-methylbutanoate (2-oxoisovalerate), the penultimate precursor to L-isoleucine and L-valine, respectively. This Crocosphaera subtropica (strain ATCC 51142 / BH68) (Cyanothece sp. (strain ATCC 51142)) protein is Dihydroxy-acid dehydratase.